We begin with the raw amino-acid sequence, 63 residues long: Large ribosomal subunit protein uL29 (63 aa).

The protein belongs to the universal ribosomal protein uL29 family.

The polypeptide is Large ribosomal subunit protein uL29 (Psychromonas ingrahamii (strain DSM 17664 / CCUG 51855 / 37)).